The primary structure comprises 141 residues: Thioredoxin-like protein SkfH (141 aa).

A Thioredoxin domain is found at 2-141 (KDEQMLTEWP…DKMLKKIAGL (140 aa)). An intrachain disulfide couples Cys-41 to Cys-44.

Required for production of the bacteriocin SkfA. In Bacillus subtilis (strain 168), this protein is Thioredoxin-like protein SkfH.